The primary structure comprises 1086 residues: Selenocysteine insertion sequence-binding protein 2-like (1086 aa).

5 disordered regions span residues 155 to 207 (GQAF…GPDS), 243 to 386 (AKGR…SESL), 615 to 657 (QEDA…SPMA), 880 to 904 (SDGL…KPSR), and 919 to 1086 (AAGS…PQST). Over residues 193–206 (NVATQKETSATGPD) the composition is skewed to polar residues. At S276 the chain carries Phosphoserine. Composition is skewed to polar residues over residues 294 to 303 (GTMNRLESSG) and 328 to 344 (QAFS…NNLQ). Residues 355 to 370 (SSERRQNLQKRQDNKH) are compositionally biased toward basic and acidic residues. Positions 624–657 (SDASLSPASQNSPYCMTPVSQGSPASSGIGSPMA) are enriched in polar residues. Over residues 922–931 (SITSAPSQGK) the composition is skewed to polar residues. Basic and acidic residues predominate over residues 933–943 (TGDKDELKPDD). Polar residues predominate over residues 947–957 (ASQQSTETGSL). Residues 981-994 (LEEEEDEEEEEEDY) are compositionally biased toward acidic residues. The segment covering 1004 to 1022 (QLNSRIESWVSETQRTMET) has biased composition (polar residues). A compositionally biased stretch (acidic residues) spans 1032–1046 (SEEDSAEQSGEEAAE).

In terms of biological role, binds SECIS (Sec insertion sequence) elements present on selenocysteine (Sec) protein mRNAs, but does not promote Sec incorporation into selenoproteins. The polypeptide is Selenocysteine insertion sequence-binding protein 2-like (Secisbp2l) (Mus musculus (Mouse)).